Here is a 101-residue protein sequence, read N- to C-terminus: Ubiquitin-related modifier 1 (101 aa).

At G101 the chain carries 1-thioglycine. A Glycyl lysine isopeptide (Gly-Lys) (interchain with K-? in acceptor proteins) cross-link involves residue G101.

This sequence belongs to the URM1 family. In terms of processing, C-terminal thiocarboxylation occurs in 2 steps, it is first acyl-adenylated (-COAMP) via the hesA/moeB/thiF part of UBA4, then thiocarboxylated (-COSH) via the rhodanese domain of UBA4.

The protein resides in the cytoplasm. It participates in tRNA modification; 5-methoxycarbonylmethyl-2-thiouridine-tRNA biosynthesis. Its function is as follows. Acts as a sulfur carrier required for 2-thiolation of mcm(5)S(2)U at tRNA wobble positions of cytosolic tRNA(Lys), tRNA(Glu) and tRNA(Gln). Serves as sulfur donor in tRNA 2-thiolation reaction by being thiocarboxylated (-COSH) at its C-terminus by the MOCS3 homolog UBA4. The sulfur is then transferred to tRNA to form 2-thiolation of mcm(5)S(2)U. Prior mcm(5) tRNA modification by the elongator complex is required for 2-thiolation. Also acts as a ubiquitin-like protein (UBL) that is covalently conjugated via an isopeptide bond to lysine residues of target proteins such as AHP1. The thiocarboxylated form serves as substrate for conjugation and oxidative stress specifically induces the formation of UBL-protein conjugates. In Scheffersomyces stipitis (strain ATCC 58785 / CBS 6054 / NBRC 10063 / NRRL Y-11545) (Yeast), this protein is Ubiquitin-related modifier 1.